A 374-amino-acid chain; its full sequence is Cytochrome b (374 aa).

4 helical membrane-spanning segments follow: residues 25-45, 69-90, 105-125, and 170-190; these read FGSM…FLAI, WIIQ…YMHI, WLSG…GYVL, and FFAL…IHII. 2 residues coordinate heme b: His-75 and His-89. Heme b contacts are provided by His-174 and His-188. An a ubiquinone-binding site is contributed by His-193. 4 consecutive transmembrane segments (helical) span residues 218–238, 280–300, 312–332, and 339–358; these read YKDM…LSFT, LGGA…PFTH, LAQI…WTAT, and FITI…MINP.

This sequence belongs to the cytochrome b family. As to quaternary structure, the cytochrome bc1 complex contains 3 respiratory subunits (MT-CYB, CYC1 and UQCRFS1), 2 core proteins (UQCRC1 and UQCRC2) and probably 6 low-molecular weight proteins. Heme b serves as cofactor.

The protein localises to the mitochondrion inner membrane. Functionally, component of the ubiquinol-cytochrome c reductase complex (complex III or cytochrome b-c1 complex) that is part of the mitochondrial respiratory chain. The b-c1 complex mediates electron transfer from ubiquinol to cytochrome c. Contributes to the generation of a proton gradient across the mitochondrial membrane that is then used for ATP synthesis. In Calliophis bivirgatus (Blue Malaysian coral snake), this protein is Cytochrome b (MT-CYB).